A 305-amino-acid polypeptide reads, in one-letter code: Probable 5-dehydro-4-deoxyglucarate dehydratase (305 aa).

The protein belongs to the DapA family.

It catalyses the reaction 5-dehydro-4-deoxy-D-glucarate + H(+) = 2,5-dioxopentanoate + CO2 + H2O. Its pathway is carbohydrate acid metabolism; D-glucarate degradation; 2,5-dioxopentanoate from D-glucarate: step 2/2. The sequence is that of Probable 5-dehydro-4-deoxyglucarate dehydratase from Pseudomonas entomophila (strain L48).